The sequence spans 360 residues: CCA-adding enzyme (360 aa).

2 residues coordinate ATP: Gly-8 and Arg-11. Gly-8 and Arg-11 together coordinate CTP. Asp-21 and Asp-23 together coordinate Mg(2+). Arg-91, Arg-137, and Arg-140 together coordinate ATP. CTP is bound by residues Arg-91, Arg-137, and Arg-140.

It belongs to the tRNA nucleotidyltransferase/poly(A) polymerase family. Bacterial CCA-adding enzyme type 2 subfamily. It depends on Mg(2+) as a cofactor.

It catalyses the reaction a tRNA precursor + 2 CTP + ATP = a tRNA with a 3' CCA end + 3 diphosphate. It carries out the reaction a tRNA with a 3' CCA end + 2 CTP + ATP = a tRNA with a 3' CCACCA end + 3 diphosphate. Catalyzes the addition and repair of the essential 3'-terminal CCA sequence in tRNAs without using a nucleic acid template. Adds these three nucleotides in the order of C, C, and A to the tRNA nucleotide-73, using CTP and ATP as substrates and producing inorganic pyrophosphate. tRNA 3'-terminal CCA addition is required both for tRNA processing and repair. Also involved in tRNA surveillance by mediating tandem CCA addition to generate a CCACCA at the 3' terminus of unstable tRNAs. While stable tRNAs receive only 3'-terminal CCA, unstable tRNAs are marked with CCACCA and rapidly degraded. This chain is CCA-adding enzyme, found in Francisella tularensis subsp. tularensis (strain FSC 198).